Reading from the N-terminus, the 632-residue chain is Biosynthetic arginine decarboxylase (632 aa).

Residue K101 is modified to N6-(pyridoxal phosphate)lysine. Residue 281–291 coordinates substrate; the sequence is FDVGGGLGVDY.

Belongs to the Orn/Lys/Arg decarboxylase class-II family. SpeA subfamily. Requires Mg(2+) as cofactor. Pyridoxal 5'-phosphate serves as cofactor.

It carries out the reaction L-arginine + H(+) = agmatine + CO2. It functions in the pathway amine and polyamine biosynthesis; agmatine biosynthesis; agmatine from L-arginine: step 1/1. In terms of biological role, catalyzes the biosynthesis of agmatine from arginine. This Salmonella dublin (strain CT_02021853) protein is Biosynthetic arginine decarboxylase.